We begin with the raw amino-acid sequence, 940 residues long: Isoleucine--tRNA ligase (940 aa).

A 'HIGH' region motif is present at residues 58–68 (PYANGNIHIGH). Residue Glu563 participates in L-isoleucyl-5'-AMP binding. Positions 604-608 (KMSKS) match the 'KMSKS' region motif. Residue Lys607 participates in ATP binding. Residues Cys903, Cys906, Cys923, and Cys926 each contribute to the Zn(2+) site.

The protein belongs to the class-I aminoacyl-tRNA synthetase family. IleS type 1 subfamily. As to quaternary structure, monomer. The cofactor is Zn(2+).

It localises to the cytoplasm. The enzyme catalyses tRNA(Ile) + L-isoleucine + ATP = L-isoleucyl-tRNA(Ile) + AMP + diphosphate. Functionally, catalyzes the attachment of isoleucine to tRNA(Ile). As IleRS can inadvertently accommodate and process structurally similar amino acids such as valine, to avoid such errors it has two additional distinct tRNA(Ile)-dependent editing activities. One activity is designated as 'pretransfer' editing and involves the hydrolysis of activated Val-AMP. The other activity is designated 'posttransfer' editing and involves deacylation of mischarged Val-tRNA(Ile). The sequence is that of Isoleucine--tRNA ligase from Buchnera aphidicola subsp. Acyrthosiphon pisum (strain 5A).